Consider the following 272-residue polypeptide: 3-methyl-2-oxobutanoate hydroxymethyltransferase (272 aa).

Residues Asp43 and Asp82 each contribute to the Mg(2+) site. 3-methyl-2-oxobutanoate contacts are provided by residues 43–44 (DS), Asp82, and Lys112. Glu114 serves as a coordination point for Mg(2+). Glu179 acts as the Proton acceptor in catalysis.

The protein belongs to the PanB family. As to quaternary structure, homodecamer; pentamer of dimers. It depends on Mg(2+) as a cofactor.

It localises to the cytoplasm. The enzyme catalyses 3-methyl-2-oxobutanoate + (6R)-5,10-methylene-5,6,7,8-tetrahydrofolate + H2O = 2-dehydropantoate + (6S)-5,6,7,8-tetrahydrofolate. Its pathway is cofactor biosynthesis; (R)-pantothenate biosynthesis; (R)-pantoate from 3-methyl-2-oxobutanoate: step 1/2. Functionally, catalyzes the reversible reaction in which hydroxymethyl group from 5,10-methylenetetrahydrofolate is transferred onto alpha-ketoisovalerate to form ketopantoate. The chain is 3-methyl-2-oxobutanoate hydroxymethyltransferase from Staphylococcus aureus (strain Newman).